The primary structure comprises 311 residues: MGDYPFQFPEFSSESLNETAKKFINYLKIEKNYSQNTINAYSIDLKFFFEFCEKEQLDIFQIEPVDIRSYFAYLAKKHEIDRRSQSRKLSSLRTFYKVLLREDLVKSNPATQLSFPKVRKEVPKNFRINETEEILEFESENASEVSEIRDRAMIEVLYSSGLRVFELVNAKLNSLSKDLTVLKVLGKGRKERFVYFGKEAVSSLQKYLEYRNVSFPDAEEIFLNQRGKKLTTRGVRYILNERRKKMGWEKTITPHKFRHTFATDLLDAGAEIRAVQELLGHSSLSTTQIYLSVSKEKIKEVYRKAHPHARK.

Positions 14–100 constitute a Core-binding (CB) domain; the sequence is ESLNETAKKF…SLRTFYKVLL (87 aa). A Tyr recombinase domain is found at 121–303; sequence EVPKNFRINE…SKEKIKEVYR (183 aa). Active-site residues include Arg163, Lys187, His255, Arg258, and His281. The active-site O-(3'-phospho-DNA)-tyrosine intermediate is Tyr290.

This sequence belongs to the 'phage' integrase family. XerC subfamily. Forms a cyclic heterotetrameric complex composed of two molecules of XerC and two molecules of XerD.

The protein resides in the cytoplasm. Functionally, site-specific tyrosine recombinase, which acts by catalyzing the cutting and rejoining of the recombining DNA molecules. The XerC-XerD complex is essential to convert dimers of the bacterial chromosome into monomers to permit their segregation at cell division. It also contributes to the segregational stability of plasmids. The protein is Tyrosine recombinase XerC of Leptospira interrogans serogroup Icterohaemorrhagiae serovar copenhageni (strain Fiocruz L1-130).